Reading from the N-terminus, the 248-residue chain is Oligo(A)/oligo(T)-binding protein (248 aa).

Residues 1-36 (MAKTLAQGRKPGSGRKPGKGKTLREGRKPGSGRRRR) mediate DNA binding. Disordered stretches follow at residues 1-127 (MAKT…LQQQ) and 219-248 (TAASNQPRTQPSPAAHITKNSDSTEKNATI). 3 repeat units span residues 8 to 12 (GRKPG), 14 to 18 (GRKPG), and 26 to 30 (GRKPG). The segment at 8–30 (GRKPGSGRKPGKGKTLREGRKPG) is 3 X 5 AA repeats of G-R-K-P-G. A compositionally biased stretch (basic residues) spans 12-21 (GSGRKPGKGK). Basic and acidic residues predominate over residues 37 to 71 (QDTGGKETDGSQQDQESRLISSRDMEAVDALRELT). Composition is skewed to low complexity over residues 72–100 (HSPSSHSAHNSSAAPPPHAAAASTSLPPS) and 111–127 (QQQQQQQQQQQQLLQQQ).

Binds as a dimer or higher oligomer.

In terms of biological role, DNA-binding protein that recognizes oligo(A).oligo(T) tracts (A.T DNA). Can bind to any 11 bp sequence in which 10 bases conform to an uninterrupted oligo(A).oligo(T) tract. The sequence is that of Oligo(A)/oligo(T)-binding protein (DAT1) from Saccharomyces cerevisiae (strain ATCC 204508 / S288c) (Baker's yeast).